A 228-amino-acid polypeptide reads, in one-letter code: Ribulose-phosphate 3-epimerase (228 aa).

Ser9 contributes to the substrate binding site. A divalent metal cation contacts are provided by His34, Asp36, and His70. The active-site Proton acceptor is the Asp36. Residues His70, 146 to 149, 179 to 181, and 201 to 202 each bind substrate; these read GFPG, DGG, and GS. Position 179 (Asp179) interacts with a divalent metal cation. Asp179 serves as the catalytic Proton donor.

It belongs to the ribulose-phosphate 3-epimerase family. It depends on a divalent metal cation as a cofactor.

The enzyme catalyses D-ribulose 5-phosphate = D-xylulose 5-phosphate. Its pathway is carbohydrate degradation. In terms of biological role, catalyzes the reversible epimerization of D-ribulose 5-phosphate to D-xylulose 5-phosphate. This chain is Ribulose-phosphate 3-epimerase, found in Buchnera aphidicola subsp. Baizongia pistaciae (strain Bp).